We begin with the raw amino-acid sequence, 1341 residues long: WD repeat-containing protein 19 (1341 aa).

WD repeat units follow at residues 11–51, 52–92, 95–134, 137–175, 273–311, and 317–356; these read SWLG…RSEI, SLPG…TSQL, GMRD…KIPV, KHTK…IRQT, DHKD…DMYA, and DENK…LGDA. TPR repeat units lie at residues 736 to 769, 775 to 808, 840 to 873, 895 to 928, 951 to 984, and 1020 to 1053; these read AQDL…AKRL, PFIS…DNKE, RVLK…DRAA, PKIH…NSVI, LDGA…NEAF, and EKRH…EDNV.

In terms of assembly, component of the IFT complex A (IFT-A) complex. IFT-A complex is divided into a core subcomplex composed of IFT122:IFT140:WDR19 which is associated with TULP3 and a peripheral subcomplex composed of IFT43:WDR35:TTC21B. Interacts (via C-terminal region) with IFT122 (via C-terminal region). Interacts with BBS1. Interacts with TTC25. As to expression, tissue-specific expression of isoforms. Expressed in the prostate, testis, epididymis, submaxillary and salivary glands. Expressed in ependymal cells lining brain ventricles (at protein level).

Its subcellular location is the cell projection. The protein localises to the cilium. It is found in the cytoplasm. The protein resides in the cytoskeleton. It localises to the cilium basal body. Its subcellular location is the photoreceptor outer segment. The protein localises to the flagellum. Functionally, as component of the IFT complex A (IFT-A), a complex required for retrograde ciliary transport and entry into cilia of G protein-coupled receptors (GPCRs), it is involved in cilia function and/or assembly. Essential for functional IFT-A assembly and ciliary entry of GPCRs. Associates with the BBSome complex to mediate ciliary transport. The protein is WD repeat-containing protein 19 of Mus musculus (Mouse).